The following is a 468-amino-acid chain: Monogalactosyldiacylglycerol synthase 2, chloroplastic (468 aa).

UDP-binding positions include His82, Arg251, 361-365 (GTIAE), and Glu383.

Belongs to the glycosyltransferase 28 family. In terms of tissue distribution, expressed mainly in floral buds. Detected in roots, leaves, stems, siliques and pollen tubes.

It is found in the plastid. The protein localises to the chloroplast outer membrane. It catalyses the reaction a 1,2-diacyl-sn-glycerol + UDP-alpha-D-galactose = a 1,2-diacyl-3-O-(beta-D-galactosyl)-sn-glycerol + UDP + H(+). The catalysed reaction is 1,2-di-(9Z,12Z-octadecadienoyl)-sn-glycerol + UDP-alpha-D-galactose = 1,2-di-(9Z,12Z-octadecadienoyl)-3-beta-D-galactosyl-sn-glycerol + UDP + H(+). It carries out the reaction 1-(9Z-octadecenoyl)-2-hexadecanoyl-sn-glycerol + UDP-alpha-D-galactose = 1-(9Z-octadecenoyl)-2-hexadecanoyl-3-beta-D-galactosyl-sn-glycerol + UDP + H(+). The enzyme catalyses 1,2-di-(9Z-octadecenoyl)-sn-glycerol + UDP-alpha-D-galactose = 1,2-di-(9Z-octadecenoyl)-3-beta-D-galactosyl-sn-glycerol + UDP + H(+). Inhibited by galvestine-1. Involved in the synthesis of monogalactosyldiacylglycerol, the major structural component of photosynthetic membranes and in the chloroplast envelope biogenesis. Can use both prokaryotic (18:1/16:0) or eukaryotic (18:2/18:2) 1,2-diacylglycerol species, but operates with some preference for the eukaryotic one. Plays a minor role in galactolipid synthesis in chloroplasts. Is required for membrane lipid remodeling in phosphate-starved roots. Acts as the minor factor involved in digalactosyldiacylglycerol (DGDG) biosynthesis in phosphate-starved roots. Does not seem to be required for plant growth under nutrient-sufficient conditions. Required for membrane lipid remodeling in plants grown in acidic conditions. The protein is Monogalactosyldiacylglycerol synthase 2, chloroplastic of Arabidopsis thaliana (Mouse-ear cress).